A 534-amino-acid chain; its full sequence is Nuclear polyadenylated RNA-binding protein 4 (534 aa).

The disordered stretch occupies residues 1 to 154 (MSSDEEDFND…TKEERSKADL (154 aa)). Serine 2 and serine 3 each carry phosphoserine. Over residues 13–30 (GDDKPTTTEEVKKEEEQN) the composition is skewed to basic and acidic residues. The segment covering 37 to 78 (SQLDQLAALQALSSSLNKLNNPNSNNSSSNNSNQDTSSSKQD) has biased composition (low complexity). A phosphoserine mark is found at serine 51 and serine 87. Over residues 81–98 (ANDKEGSNEDTKNEKKQE) the composition is skewed to basic and acidic residues. Composition is skewed to low complexity over residues 99 to 112 (SATSANANANASSA) and 121 to 144 (QLQQTMSQFQQPSSQSPPQQQVTQ). A compositionally biased stretch (basic and acidic residues) spans 145–154 (TKEERSKADL). 2 RRM domains span residues 159–241 (CKMF…EQDK) and 243–320 (GKIF…RAEP). Serine 206 carries the phosphoserine modification. Disordered stretches follow at residues 316–354 (KRAEPRHMQQKSSNNGGNNGGNNMNRRGGNFGNQGDFNQ) and 415–534 (MPPN…PYNR). Residues 336 to 354 (GNNMNRRGGNFGNQGDFNQ) are compositionally biased toward low complexity. The span at 420-459 (MTLNQPQQDSNATQGSPAPSDSDNNKSNDVQTIGNTSNTD) shows a compositional bias: polar residues. Threonine 458 carries the phosphothreonine modification. Phosphoserine is present on residues serine 460 and serine 462. The span at 460–475 (SGSPPLNLPNGPKGPS) shows a compositional bias: low complexity. Over residues 478 to 505 (NDDHNSGYGYNRDRGDRDRNDRDRDYNH) the composition is skewed to basic and acidic residues. An Omega-N-methylarginine modification is found at arginine 519. The segment covering 523 to 534 (NRRNNGYHPYNR) has biased composition (low complexity).

In terms of assembly, interacts with NAM7. In terms of processing, methylated by HMT1. The methylation is required for nuclear export.

It localises to the cytoplasm. The protein resides in the nucleus. Its subcellular location is the stress granule. Functionally, RNA-binding protein, which is involved in the polyadenylation-dependent pre-mRNA 3'-end formation and cooperates with the cleavage factor CFIA complex and the cleavage and polyadenylation factor (CPF) complex. May be involved in regulation of poly(A) site selection. Is involved in nonsense-mediated mRNA decay. Seems to bind to an RNA downstream sequence element (DSE) located 3' of a nonsense codon and may mark the transcript for decay. In Saccharomyces cerevisiae (strain ATCC 204508 / S288c) (Baker's yeast), this protein is Nuclear polyadenylated RNA-binding protein 4.